We begin with the raw amino-acid sequence, 95 residues long: Acylphosphatase (95 aa).

The Acylphosphatase-like domain maps to 8–95 (RVSARITGRV…DAFEGFRVRR (88 aa)). Catalysis depends on residues arginine 23 and asparagine 41.

This sequence belongs to the acylphosphatase family.

It catalyses the reaction an acyl phosphate + H2O = a carboxylate + phosphate + H(+). This Salinibacter ruber (strain DSM 13855 / M31) protein is Acylphosphatase (acyP).